The primary structure comprises 402 residues: Queuine tRNA-ribosyltransferase-like protein (402 aa).

This sequence belongs to the queuine tRNA-ribosyltransferase family.

The sequence is that of Queuine tRNA-ribosyltransferase-like protein from Theileria annulata.